The following is a 432-amino-acid chain: MVSEQIIDISGPLKGEIEVPGDKSMTHRAIMLASLAEGTSNIYKPLLGEDCRRTMDIFRLLGVDIKEDEDKLVVNSPGYKAFKTPHQVLYTGNSGTTTRLLAGLLSGLGIESVLSGDVSIGKRPMDRVLRPLKLMDANIEGIEDNYTPLIIKPSVIKGINYQMEVASAQVKSAILFASLFSNDTTVIKELDVSRNHTETMFRHFNIPIEAERLSITTTPDAIQHIKPADFHVPGDISSAAFFIVAALITPESDVTIHNVGINPTRSGIIDIVEKMGGNIQLFNQTTGAEPTASIRIQYTPMLQPITIEGELVPKAIDELPVIALLCTQAVGTSTIKDAEELKVKETNRIDTTADMLNLLGFELQPTNDGLIIHPSEFKTNATVDSLTDHRIGMMLAVASLLSSEPVKIKQFDAVNVSFPGFLPKLKLLENEG.

Residues K23, S24, and R28 each coordinate 3-phosphoshikimate. K23 lines the phosphoenolpyruvate pocket. Residues G95 and R123 each coordinate phosphoenolpyruvate. S167, Q169, D317, and K344 together coordinate 3-phosphoshikimate. A phosphoenolpyruvate-binding site is contributed by Q169. The active-site Proton acceptor is D317. Phosphoenolpyruvate contacts are provided by R348 and R390.

Belongs to the EPSP synthase family. In terms of assembly, monomer.

It is found in the cytoplasm. It carries out the reaction 3-phosphoshikimate + phosphoenolpyruvate = 5-O-(1-carboxyvinyl)-3-phosphoshikimate + phosphate. The protein operates within metabolic intermediate biosynthesis; chorismate biosynthesis; chorismate from D-erythrose 4-phosphate and phosphoenolpyruvate: step 6/7. In terms of biological role, catalyzes the transfer of the enolpyruvyl moiety of phosphoenolpyruvate (PEP) to the 5-hydroxyl of shikimate-3-phosphate (S3P) to produce enolpyruvyl shikimate-3-phosphate and inorganic phosphate. The polypeptide is 3-phosphoshikimate 1-carboxyvinyltransferase (Staphylococcus aureus (strain N315)).